A 141-amino-acid chain; its full sequence is Hemoglobin subunit alpha (141 aa).

Positions 1–141 (VLSDEDKTNV…VSTVLTSKYR (141 aa)) constitute a Globin domain. A Phosphoserine modification is found at Ser-3. Lys-7 is subject to N6-succinyllysine. Residue Thr-8 is modified to Phosphothreonine. Lys-11 is modified (N6-succinyllysine). Residue Lys-16 is modified to N6-acetyllysine; alternate. Lys-16 carries the N6-succinyllysine; alternate modification. Tyr-24 bears the Phosphotyrosine mark. The residue at position 35 (Ser-35) is a Phosphoserine. Lys-40 carries the post-translational modification N6-succinyllysine. Ser-49 is subject to Phosphoserine. Position 58 (His-58) interacts with O2. A heme b-binding site is contributed by His-87. Ser-102 is subject to Phosphoserine. Position 108 is a phosphothreonine (Thr-108). A phosphoserine mark is found at Ser-124 and Ser-131. 2 positions are modified to phosphothreonine: Thr-134 and Thr-137. Ser-138 carries the post-translational modification Phosphoserine.

The protein belongs to the globin family. In terms of assembly, heterotetramer of two alpha chains and two beta chains. As to expression, red blood cells.

Its function is as follows. Involved in oxygen transport from the lung to the various peripheral tissues. Hemopressin acts as an antagonist peptide of the cannabinoid receptor CNR1. Hemopressin-binding efficiently blocks cannabinoid receptor CNR1 and subsequent signaling. This is Hemoglobin subunit alpha (HBA) from Trichechus inunguis (Amazon manatee).